A 218-amino-acid polypeptide reads, in one-letter code: Thiopurine S-methyltransferase (218 aa).

Residues tryptophan 10, leucine 45, glutamate 66, and arginine 123 each contribute to the S-adenosyl-L-methionine site.

It belongs to the class I-like SAM-binding methyltransferase superfamily. TPMT family.

The protein localises to the cytoplasm. The catalysed reaction is S-adenosyl-L-methionine + a thiopurine = S-adenosyl-L-homocysteine + a thiopurine S-methylether.. The sequence is that of Thiopurine S-methyltransferase from Shewanella sp. (strain W3-18-1).